Consider the following 133-residue polypeptide: Probable non-specific lipid-transfer protein 2 (133 aa).

An N-terminal signal peptide occupies residues 1-31; it reads MRTVSMAALVVIAAALAWTSSAELASAPAPG. Intrachain disulfides connect C35–C83, C45–C60, C61–C106, and C81–C121.

The protein belongs to the plant LTP family.

Functionally, plant non-specific lipid-transfer proteins transfer phospholipids as well as galactolipids across membranes. May play a role in wax or cutin deposition in the cell walls of expanding epidermal cells and certain secretory tissues. The chain is Probable non-specific lipid-transfer protein 2 from Parietaria judaica (Pellitory-of-the-wall).